A 267-amino-acid polypeptide reads, in one-letter code: tRNA pseudouridine synthase A (267 aa).

Aspartate 54 functions as the Nucleophile in the catalytic mechanism. Tyrosine 114 lines the substrate pocket.

It belongs to the tRNA pseudouridine synthase TruA family. In terms of assembly, homodimer.

It catalyses the reaction uridine(38/39/40) in tRNA = pseudouridine(38/39/40) in tRNA. Functionally, formation of pseudouridine at positions 38, 39 and 40 in the anticodon stem and loop of transfer RNAs. This Tropheryma whipplei (strain TW08/27) (Whipple's bacillus) protein is tRNA pseudouridine synthase A.